A 509-amino-acid chain; its full sequence is MGGSSRARWVALGLGALGLLFAALGVVMILMVPSLIKQQVLKNVRIDPSSLSFGMWKEIPVPFYLSVYFFEVVNPNEVLNGQKPVVRERGPYVYREFRQKVNITFNDNDTVSFVENRSLHFQPDKSHGSESDYIVLPNILVLGGSILMESKPVSLKLMMTLALVTMGQRAFMNRTVGEILWGYDDPFVHFLNTYLPDMLPIKGKFGLFVGMNNSNSGVFTVFTGVQNFSRIHLVDKWNGLSKIDYWHSEQCNMINGTSGQMWAPFMTPESSLEFFSPEACRSMKLTYNESRVFEGIPTYRFTAPDTLFANGSVYPPNEGFCPCRESGIQNVSTCRFGAPLFLSHPHFYNADPVLSEAVLGLNPNPKEHSLFLDIHPVTGIPMNCSVKMQLSLYIKSVKGIGQTGKIEPVVLPLLWFEQSGAMGGKPLSTFYTQLVLMPQVLHYAQYVLLGLGGLLLLVPIICQLRSQEKCFLFWSGSKKGSQDKEAIQAYSESLMSPAAKGTVLQEAKL.

Over methionine 1–alanine 11 the chain is Cytoplasmic. A helical membrane pass occupies residues leucine 12–valine 32. The Extracellular portion of the chain corresponds to proline 33–valine 440. Residues asparagine 102, asparagine 108, asparagine 116, asparagine 173, asparagine 212, asparagine 227, asparagine 255, asparagine 288, asparagine 310, asparagine 330, and asparagine 383 are each glycosylated (N-linked (GlcNAc...) asparagine). Cysteine 251 and cysteine 384 are oxidised to a cystine. Residues leucine 441–isoleucine 461 form a helical membrane-spanning segment. Cysteine 462 is lipidated: S-palmitoyl cysteine. At cysteine 462–leucine 509 the chain is on the cytoplasmic side.

This sequence belongs to the CD36 family. In terms of assembly, the C-terminal region binds to PDZK1. In terms of processing, N-glycosylated. The six cysteines of the extracellular domain are all involved in intramolecular disulfide bonds. As to expression, expressed primarily in liver, ovary and adrenal gland, and, at lower levels in other non-placental steroidogenic tissues, including adipose tissue, mammary gland and testis (at protein level). Isoform 2 is expressed at lower levels than isoform 1 in liver, testis and adrenal gland. At the mRNA, but not at the protein level, isoform 2 is the predominant isoform in testis (80%).

Its subcellular location is the cell membrane. It is found in the membrane. The protein resides in the caveola. In terms of biological role, receptor for different ligands such as phospholipids, cholesterol ester, lipoproteins, phosphatidylserine and apoptotic cells. Both isoform 1 and isoform 2 act as receptors for HDL, mediating selective uptake of cholesteryl ether and HDL-dependent cholesterol efflux. Also facilitates the flux of free and esterified cholesterol between the cell surface and apoB-containing lipoproteins and modified lipoproteins, although less efficiently than HDL. May be involved in the phagocytosis of apoptotic cells, via its phosphatidylserine binding activity. The protein is Scavenger receptor class B member 1 (Scarb1) of Mus musculus (Mouse).